The following is a 423-amino-acid chain: Putative competence-damage inducible protein (423 aa).

It belongs to the CinA family.

This chain is Putative competence-damage inducible protein, found in Streptococcus pyogenes serotype M2 (strain MGAS10270).